Consider the following 185-residue polypeptide: Prenylated Rab acceptor protein 1 (185 aa).

Topologically, residues 1-78 (MAVEKDQQKD…RNVEYYQSNY (78 aa)) are cytoplasmic. A required for interaction with prenylated RAB3A and VAMP2 region spans residues 30-54 (AGREWLERRRATIRSWGSFVDQRRF). Transmembrane regions (helical) follow at residues 79 to 94 (VFVFLGLILYCVATSP) and 95 to 112 (MLLVALAVFFGACYILYL). Topologically, residues 113–131 (RTLQSKFVLFGREVSPAHQ) are cytoplasmic. The next 2 membrane-spanning stretches (helical) occupy residues 132–148 (YALAGGVSFPFFWLAGA) and 149–165 (GSAVFWVLGATLVVIGS). A required for interaction with GDI1 region spans residues 165 to 185 (SHAAFHQIEAVDGEELQMEPV). Over 166–185 (HAAFHQIEAVDGEELQMEPV) the chain is Cytoplasmic. The tract at residues 175-185 (VDGEELQMEPV) is required for interaction with prenylated RAB3A and VAMP2. Residues 175 to 185 (VDGEELQMEPV) form a homodimerization region.

It belongs to the PRA1 family. In terms of assembly, homodimer. Interacts with VAMP2 (synaptobrevin-2), prenylated Rab proteins, GDI1, NDRG1 and PCLO.

The protein localises to the cell membrane. It localises to the cytoplasm. It is found in the golgi apparatus. The protein resides in the cytoplasmic vesicle. Its subcellular location is the secretory vesicle. The protein localises to the synaptic vesicle. Functionally, general Rab protein regulator required for vesicle formation from the Golgi complex. May control vesicle docking and fusion by mediating the action of Rab GTPases to the SNARE complexes. In addition it inhibits the removal of Rab GTPases from the membrane by GDI1. The polypeptide is Prenylated Rab acceptor protein 1 (RABAC1) (Bos taurus (Bovine)).